Reading from the N-terminus, the 406-residue chain is Olfactomedin-like protein 3 (406 aa).

An N-terminal signal peptide occupies residues 1 to 21; it reads MGPHTQLLILLLLSWLGPLQG. A coiled-coil region spans residues 22 to 101; it reads QQHHLVEYME…REVDYLETQN (80 aa). Residues 134–401 enclose the Olfactomedin-like domain; sequence DCGYTISQVR…QIVYKLEMRK (268 aa). An intrachain disulfide couples C135 to C328. A glycan (N-linked (GlcNAc...) asparagine) is linked at N248.

Belongs to the OLFML3 family.

It is found in the secreted. Functionally, secreted scaffold protein that plays an essential role in dorsoventral patterning during early development. Stabilizes axial formation by restricting chordin (CHRD) activity on the dorsal side. Acts by facilitating the association between the tolloid proteases and their substrate chordin (CHRD), leading to enhance chordin (CHRD) degradation. May have matrix-related function involved in placental and embryonic development, or play a similar role in other physiological processes. The sequence is that of Olfactomedin-like protein 3 (OLFML3) from Bos taurus (Bovine).